Consider the following 621-residue polypeptide: Cryptochrome-1 (621 aa).

The region spanning 3 to 132 (VNAVHWFRKG…EVIVRISHTL (130 aa)) is the Photolyase/cryptochrome alpha/beta domain. 3 short sequence motifs (LIR) span residues 50 to 54 (NRWRF), 82 to 87 (DVFPRL), and 151 to 156 (KRFQTL). Residue Ser252 participates in FAD binding. Short sequence motifs (LIR) lie at residues 255–260 (LRFGCL), 271–276 (DLYKKV), 285–290 (SLYGQL), and 335–339 (TGFPW). Gln289 is a binding site for FAD. His355 provides a ligand contact to FAD. Positions 379-384 (KVFEEL) match the LIR 8 motif. 387–389 (DAD) serves as a coordination point for FAD. 5 short sequence motifs (LIR) span residues 395–400 (GSWMWL), 411–416 (HCYCPV), 430–435 (RRYLPV), 486–491 (QIYQQL), and 492–497 (SRYRGL). A disordered region spans residues 581–621 (QSHLMQPGRASLGTGISAGKRPNPEEETQSVGPKVQRQSTN).

The protein belongs to the DNA photolyase class-1 family. Component of the circadian core oscillator, which includes the CRY proteins, CLOCK or NPAS2, BMAL1 or BMAL2, CSNK1E, and the PER proteins. Requires FAD as cofactor. The cofactor is (6R)-5,10-methylene-5,6,7,8-tetrahydrofolate. Expressed in the pineal gland.

It is found in the cytoplasm. The protein resides in the nucleus. Functionally, transcriptional repressor which forms a core component of the circadian clock. The circadian clock, an internal time-keeping system, regulates various physiological processes through the generation of approximately 24 hour circadian rhythms in gene expression, which are translated into rhythms in metabolism and behavior. It is derived from the Latin roots 'circa' (about) and 'diem' (day) and acts as an important regulator of a wide array of physiological functions including metabolism, sleep, body temperature, blood pressure, endocrine, immune, cardiovascular, and renal function. Consists of two major components: the central clock, residing in the suprachiasmatic nucleus (SCN) of the brain, and the peripheral clocks that are present in nearly every tissue and organ system. Both the central and peripheral clocks can be reset by environmental cues, also known as Zeitgebers (German for 'timegivers'). The predominant Zeitgeber for the central clock is light, which is sensed by retina and signals directly to the SCN. The central clock entrains the peripheral clocks through neuronal and hormonal signals, body temperature and feeding-related cues, aligning all clocks with the external light/dark cycle. Circadian rhythms allow an organism to achieve temporal homeostasis with its environment at the molecular level by regulating gene expression to create a peak of protein expression once every 24 hours to control when a particular physiological process is most active with respect to the solar day. Transcription and translation of core clock components (CLOCK, NPAS2, BMAL1, BMAL2, PER1, PER2, PER3, CRY1 and CRY2) plays a critical role in rhythm generation, whereas delays imposed by post-translational modifications (PTMs) are important for determining the period (tau) of the rhythms (tau refers to the period of a rhythm and is the length, in time, of one complete cycle). A diurnal rhythm is synchronized with the day/night cycle, while the ultradian and infradian rhythms have a period shorter and longer than 24 hours, respectively. Disruptions in the circadian rhythms contribute to the pathology of cardiovascular diseases, cancer, metabolic syndromes and aging. A transcription/translation feedback loop (TTFL) forms the core of the molecular circadian clock mechanism. Transcription factors, CLOCK or NPAS2 and BMAL1 or BMAL2, form the positive limb of the feedback loop, act in the form of a heterodimer and activate the transcription of core clock genes and clock-controlled genes (involved in key metabolic processes), harboring E-box elements (5'-CACGTG-3') within their promoters. The core clock genes: PER1/2/3 and CRY1/2 which are transcriptional repressors form the negative limb of the feedback loop and interact with the CLOCK|NPAS2-BMAL1|BMAL2 heterodimer inhibiting its activity and thereby negatively regulating their own expression. This heterodimer also activates nuclear receptors NR1D1/2 and RORA/B/G, which form a second feedback loop and which activate and repress BMAL1 transcription, respectively. CRY1 and CRY2 have redundant functions but also differential and selective contributions at least in defining the pace of the SCN circadian clock and its circadian transcriptional outputs. More potent transcriptional repressor in cerebellum and liver than CRY2, though more effective in lengthening the period of the SCN oscillator. On its side, CRY2 seems to play a critical role in tuning SCN circadian period by opposing the action of CRY1. With CRY2, is dispensable for circadian rhythm generation but necessary for the development of intercellular networks for rhythm synchrony. Capable of translocating circadian clock core proteins such as PER proteins to the nucleus. Interacts with CLOCK-BMAL1 independently of PER proteins and is found at CLOCK-BMAL1-bound sites, suggesting that CRY may act as a molecular gatekeeper to maintain CLOCK-BMAL1 in a poised and repressed state until the proper time for transcriptional activation. Represses CLOCK-BMAL1-mediated transcriptional activation. The chain is Cryptochrome-1 (CRY1) from Gallus gallus (Chicken).